A 192-amino-acid polypeptide reads, in one-letter code: Photosystem I assembly protein Ycf4 (192 aa).

The next 2 membrane-spanning stretches (helical) occupy residues 30–52 (YFWA…SSYL) and 72–94 (IAIG…AIAW).

The protein belongs to the Ycf4 family.

The protein localises to the cellular thylakoid membrane. In terms of biological role, seems to be required for the assembly of the photosystem I complex. This is Photosystem I assembly protein Ycf4 from Thermosynechococcus vestitus (strain NIES-2133 / IAM M-273 / BP-1).